A 167-amino-acid polypeptide reads, in one-letter code: Translation initiation factor IF-3 (167 aa).

Belongs to the IF-3 family. Monomer.

The protein resides in the cytoplasm. Its function is as follows. IF-3 binds to the 30S ribosomal subunit and shifts the equilibrium between 70S ribosomes and their 50S and 30S subunits in favor of the free subunits, thus enhancing the availability of 30S subunits on which protein synthesis initiation begins. This is Translation initiation factor IF-3 from Bacillus cereus (strain ATCC 14579 / DSM 31 / CCUG 7414 / JCM 2152 / NBRC 15305 / NCIMB 9373 / NCTC 2599 / NRRL B-3711).